We begin with the raw amino-acid sequence, 340 residues long: Ketol-acid reductoisomerase (NADP(+)) (340 aa).

The KARI N-terminal Rossmann domain occupies 3–182 (VQMEYEKDVK…GAARVGLLET (180 aa)). Residues 26-29 (YGSQ), Arg49, Ser53, and 83-86 (DEIQ) contribute to the NADP(+) site. The active site involves His108. NADP(+) is bound at residue Gly134. Residues 183-328 (TYKEETEEDL…AELRKAMPFV (146 aa)) enclose the KARI C-terminal knotted domain. Residues Asp191, Glu195, Glu227, and Glu231 each contribute to the Mg(2+) site. Ser252 is a binding site for substrate.

This sequence belongs to the ketol-acid reductoisomerase family. It depends on Mg(2+) as a cofactor.

The catalysed reaction is (2R)-2,3-dihydroxy-3-methylbutanoate + NADP(+) = (2S)-2-acetolactate + NADPH + H(+). It catalyses the reaction (2R,3R)-2,3-dihydroxy-3-methylpentanoate + NADP(+) = (S)-2-ethyl-2-hydroxy-3-oxobutanoate + NADPH + H(+). Its pathway is amino-acid biosynthesis; L-isoleucine biosynthesis; L-isoleucine from 2-oxobutanoate: step 2/4. The protein operates within amino-acid biosynthesis; L-valine biosynthesis; L-valine from pyruvate: step 2/4. In terms of biological role, involved in the biosynthesis of branched-chain amino acids (BCAA). Catalyzes an alkyl-migration followed by a ketol-acid reduction of (S)-2-acetolactate (S2AL) to yield (R)-2,3-dihydroxy-isovalerate. In the isomerase reaction, S2AL is rearranged via a Mg-dependent methyl migration to produce 3-hydroxy-3-methyl-2-ketobutyrate (HMKB). In the reductase reaction, this 2-ketoacid undergoes a metal-dependent reduction by NADPH to yield (R)-2,3-dihydroxy-isovalerate. The chain is Ketol-acid reductoisomerase (NADP(+)) from Streptococcus thermophilus (strain CNRZ 1066).